We begin with the raw amino-acid sequence, 419 residues long: CCA-adding enzyme (419 aa).

Serine 54 and arginine 57 together coordinate ATP. CTP-binding residues include serine 54 and arginine 57. Positions 66, 68, and 118 each coordinate Mg(2+). Positions 141, 161, and 170 each coordinate ATP. Residues histidine 141, lysine 161, and tyrosine 170 each contribute to the CTP site.

Belongs to the tRNA nucleotidyltransferase/poly(A) polymerase family. Archaeal CCA-adding enzyme subfamily. Homodimer. Requires Mg(2+) as cofactor.

The catalysed reaction is a tRNA precursor + 2 CTP + ATP = a tRNA with a 3' CCA end + 3 diphosphate. It catalyses the reaction a tRNA with a 3' CCA end + 2 CTP + ATP = a tRNA with a 3' CCACCA end + 3 diphosphate. Functionally, catalyzes the addition and repair of the essential 3'-terminal CCA sequence in tRNAs without using a nucleic acid template. Adds these three nucleotides in the order of C, C, and A to the tRNA nucleotide-73, using CTP and ATP as substrates and producing inorganic pyrophosphate. tRNA 3'-terminal CCA addition is required both for tRNA processing and repair. Also involved in tRNA surveillance by mediating tandem CCA addition to generate a CCACCA at the 3' terminus of unstable tRNAs. While stable tRNAs receive only 3'-terminal CCA, unstable tRNAs are marked with CCACCA and rapidly degraded. The polypeptide is CCA-adding enzyme (Pyrobaculum aerophilum (strain ATCC 51768 / DSM 7523 / JCM 9630 / CIP 104966 / NBRC 100827 / IM2)).